The primary structure comprises 357 residues: Chorismate synthase (357 aa).

An NADP(+)-binding site is contributed by R46. FMN is bound by residues 123–125 (RSS), 235–236 (NA), G275, 290–294 (KPTPS), and R316.

The protein belongs to the chorismate synthase family. In terms of assembly, homotetramer. The cofactor is FMNH2.

The catalysed reaction is 5-O-(1-carboxyvinyl)-3-phosphoshikimate = chorismate + phosphate. The protein operates within metabolic intermediate biosynthesis; chorismate biosynthesis; chorismate from D-erythrose 4-phosphate and phosphoenolpyruvate: step 7/7. Functionally, catalyzes the anti-1,4-elimination of the C-3 phosphate and the C-6 proR hydrogen from 5-enolpyruvylshikimate-3-phosphate (EPSP) to yield chorismate, which is the branch point compound that serves as the starting substrate for the three terminal pathways of aromatic amino acid biosynthesis. This reaction introduces a second double bond into the aromatic ring system. This chain is Chorismate synthase, found in Nitratiruptor sp. (strain SB155-2).